The primary structure comprises 434 residues: MRVVILGSGVVGVTSAWYLAKEGHDVTVIDRQDGPAQETSAGNAGQISPGYAAPWAAPGVPLKAIKWMFQRHAPLAIRLDGSSLQLRWMWQMLRNCDTSHYMVNKSRMVRLAEYSRDCLKDLRAATGIQYEGRQGGTLQLFRTEQQFDNAAKDIAVLDDAGVPYSLLTAEQLATVEPALAKVAHKLTGGLRLPNDETGDCKLFTERLAKMAEQAGVKFIFNRSVDKLLVEGDQIAGVLCGDDIIKADAYVVAFGAYSTALLAGLVSIPVYPLKGYSLTIPITDPASAPFSTVLDETYKIAITRFDDRIRVGGMAEIVGFNTQLAPARRETLEMVVRDLYPHGGDISQAVFWSGLRPMTPDGTPIVGRTPLKNLYLNTGHGTLGWTMACGSGQLLADIIQGRRPAIVADDLSVARYRTGFQPLNIAPLHDIHPIR.

3–17 (VVILGSGVVGVTSAW) contributes to the FAD binding site.

This sequence belongs to the DadA oxidoreductase family. It depends on FAD as a cofactor.

The enzyme catalyses a D-alpha-amino acid + A + H2O = a 2-oxocarboxylate + AH2 + NH4(+). Its pathway is amino-acid degradation; D-alanine degradation; NH(3) and pyruvate from D-alanine: step 1/1. Oxidative deamination of D-amino acids. The sequence is that of D-amino acid dehydrogenase from Yersinia pseudotuberculosis serotype O:3 (strain YPIII).